Reading from the N-terminus, the 395-residue chain is Acetate kinase 1 (395 aa).

Asparagine 8 lines the Mg(2+) pocket. ATP is bound at residue lysine 15. Residue arginine 89 participates in substrate binding. Aspartate 146 serves as the catalytic Proton donor/acceptor. Residues 206–210 (HIGNG), 283–285 (DMR), and 330–334 (GIGEN) each bind ATP. Mg(2+) is bound at residue glutamate 382.

The protein belongs to the acetokinase family. Homodimer. It depends on Mg(2+) as a cofactor. The cofactor is Mn(2+).

The protein resides in the cytoplasm. The catalysed reaction is acetate + ATP = acetyl phosphate + ADP. The protein operates within metabolic intermediate biosynthesis; acetyl-CoA biosynthesis; acetyl-CoA from acetate: step 1/2. Functionally, catalyzes the formation of acetyl phosphate from acetate and ATP. Can also catalyze the reverse reaction. This is Acetate kinase 1 from Lactococcus lactis subsp. lactis (strain IL1403) (Streptococcus lactis).